The sequence spans 304 residues: HTH-type transcriptional regulator TtuA (304 aa).

Residues 1–58 (MELEQLKCFVAAAEELHFGRAAQKMGILPASLGRHLRLLEESLGTRLMSRTTRSVALT) form the HTH lysR-type domain. The H-T-H motif DNA-binding region spans 18–37 (FGRAAQKMGILPASLGRHLR).

This sequence belongs to the LysR transcriptional regulatory family.

Functionally, transcriptional regulator of the ttuABCDE tartrate utilization operon. The sequence is that of HTH-type transcriptional regulator TtuA (ttuA) from Agrobacterium vitis (Rhizobium vitis).